A 416-amino-acid chain; its full sequence is Multifunctional CCA protein (416 aa).

ATP is bound by residues glycine 8 and arginine 11. Positions 8 and 11 each coordinate CTP. Positions 21 and 23 each coordinate Mg(2+). ATP is bound by residues arginine 91, arginine 137, and arginine 140. Positions 91, 137, and 140 each coordinate CTP. The 102-residue stretch at 228–329 folds into the HD domain; sequence TGVHTLMVLA…VKIFDKADFW (102 aa).

It belongs to the tRNA nucleotidyltransferase/poly(A) polymerase family. Bacterial CCA-adding enzyme type 1 subfamily. In terms of assembly, monomer. Can also form homodimers and oligomers. Mg(2+) is required as a cofactor. Requires Ni(2+) as cofactor.

The catalysed reaction is a tRNA precursor + 2 CTP + ATP = a tRNA with a 3' CCA end + 3 diphosphate. It catalyses the reaction a tRNA with a 3' CCA end + 2 CTP + ATP = a tRNA with a 3' CCACCA end + 3 diphosphate. In terms of biological role, catalyzes the addition and repair of the essential 3'-terminal CCA sequence in tRNAs without using a nucleic acid template. Adds these three nucleotides in the order of C, C, and A to the tRNA nucleotide-73, using CTP and ATP as substrates and producing inorganic pyrophosphate. tRNA 3'-terminal CCA addition is required both for tRNA processing and repair. Also involved in tRNA surveillance by mediating tandem CCA addition to generate a CCACCA at the 3' terminus of unstable tRNAs. While stable tRNAs receive only 3'-terminal CCA, unstable tRNAs are marked with CCACCA and rapidly degraded. This chain is Multifunctional CCA protein, found in Shewanella baltica (strain OS155 / ATCC BAA-1091).